The following is a 305-amino-acid chain: Protoheme IX farnesyltransferase (305 aa).

9 consecutive transmembrane segments (helical) span residues 29 to 49 (VTQL…PGMV), 51 to 71 (WSVL…AFAI), 101 to 121 (TLIF…VFAN), 123 to 143 (LTMW…TILL), 151 to 171 (IVIG…AVSG), 177 to 197 (AWFL…ALAL), 221 to 241 (LLHI…PFVY), 244 to 264 (SGYI…GYAW), and 283 to 303 (ILYL…KFVP).

Belongs to the UbiA prenyltransferase family. Protoheme IX farnesyltransferase subfamily.

It is found in the cell inner membrane. The enzyme catalyses heme b + (2E,6E)-farnesyl diphosphate + H2O = Fe(II)-heme o + diphosphate. It participates in porphyrin-containing compound metabolism; heme O biosynthesis; heme O from protoheme: step 1/1. Functionally, converts heme B (protoheme IX) to heme O by substitution of the vinyl group on carbon 2 of heme B porphyrin ring with a hydroxyethyl farnesyl side group. This is Protoheme IX farnesyltransferase from Cupriavidus metallidurans (strain ATCC 43123 / DSM 2839 / NBRC 102507 / CH34) (Ralstonia metallidurans).